A 319-amino-acid chain; its full sequence is Glutathione synthetase (319 aa).

In terms of domain architecture, ATP-grasp spans 125–311 (EKLFATLFPQ…IGGLLMDAIE (187 aa)). 151–208 (FAEQQGDVILKPLDGMGGASIFRHRAGDPNLSVILETLTAHGTQQIMAQGYLPAIKDG) lines the ATP pocket. Glutamate 282 and asparagine 284 together coordinate Mg(2+).

This sequence belongs to the prokaryotic GSH synthase family. Mg(2+) is required as a cofactor. Mn(2+) serves as cofactor.

The enzyme catalyses gamma-L-glutamyl-L-cysteine + glycine + ATP = glutathione + ADP + phosphate + H(+). It functions in the pathway sulfur metabolism; glutathione biosynthesis; glutathione from L-cysteine and L-glutamate: step 2/2. The polypeptide is Glutathione synthetase (Pseudomonas syringae pv. tomato (strain ATCC BAA-871 / DC3000)).